The sequence spans 538 residues: ATP synthase subunit alpha, mitochondrial (538 aa).

Glycine 197 to threonine 204 contacts ATP. Residues phenylalanine 228–leucine 248 are essential and sufficient for enterobactin binding.

It belongs to the ATPase alpha/beta chains family. Subunit of the F-type ATPase which has 2 components, CF(1) - the catalytic core - and CF(0) - the membrane proton channel. As to expression, ubiquitous (at protein level).

Its subcellular location is the mitochondrion. The protein resides in the mitochondrion inner membrane. In terms of biological role, mitochondrial membrane ATP synthase (F(1)F(0) ATP synthase or Complex V) produces ATP from ADP in the presence of a proton gradient across the membrane which is generated by electron transport complexes of the respiratory chain. F-type ATPases consist of two structural domains, F(1) - containing the extramembraneous catalytic core, and F(0) - containing the membrane proton channel, linked together by a central stalk and a peripheral stalk. During catalysis, ATP synthesis in the catalytic domain of F(1) is coupled via a rotary mechanism of the central stalk subunits to proton translocation. Subunits alpha and beta form the catalytic core in F(1). Rotation of the central stalk against the surrounding subunits leads to hydrolysis of ATP in three separate catalytic sites on the beta subunits. Subunit alpha does not bear the catalytic high-affinity ATP-binding sites. Binds the bacterial siderophore enterobactin and is required for the assimilation of enterobactin-bound iron from non-pathogenic bacteria. Promotes mitochondrial accumulation of enterobactin-derived iron ions. The protein is ATP synthase subunit alpha, mitochondrial of Caenorhabditis elegans.